The primary structure comprises 436 residues: MDSRSPSLPDDRPDPPEQHLDARAGATLRGTAGPRGVRRILPFLGPAVIASIAYMDPGNFATNIEGGARYGYSLLWVILAANLMAMVIQNLSANLGIASGRNLPELIRERWPRPLVWFYWIQAELVAMATDLAEFLGAALAIQLLTGLPMFWGAVVTGVVTFWLLNLQKRGTRPLELAVGAFVLMIGVAYLVQVVLARPDLAAVGAGFVPRLQGPGSAYLAVGIIGATVMPHVIYLHSALTQGRIQTDTTEEKRRLVRLNRVDVIAAMGLAGLINMSMLAVAAATFHGKNVENAGDLTTAYQTLTPLLGPAASVLFAVALLASGLSSSAVGTMAGDVIMQGFMGFHIPLWLRRLITMLPAFIVILLGMDPSSVLILSQVILCFGVPFALVPLLLFTARRDVMGALVTRRSFTVIGWVIAVIIIALNGYLLWELLGG.

A compositionally biased stretch (basic and acidic residues) spans 1–22 (MDSRSPSLPDDRPDPPEQHLDA). The tract at residues 1–31 (MDSRSPSLPDDRPDPPEQHLDARAGATLRGT) is disordered. Helical transmembrane passes span 40–60 (ILPF…PGNF), 71–91 (GYSL…IQNL), 115–135 (LVWF…LAEF), 144–164 (LLTG…TFWL), 177–197 (LAVG…VVLA), 216–236 (GSAY…VIYL), 264–284 (VIAA…VAAA), 304–324 (LTPL…LASG), 354–374 (LITM…SSVL), 375–395 (ILSQ…LLLF), and 411–431 (FTVI…YLLW).

The protein belongs to the NRAMP family.

The protein localises to the cell membrane. In terms of biological role, h(+)-stimulated, divalent metal cation uptake system. The chain is Divalent metal cation transporter MntH from Deinococcus radiodurans (strain ATCC 13939 / DSM 20539 / JCM 16871 / CCUG 27074 / LMG 4051 / NBRC 15346 / NCIMB 9279 / VKM B-1422 / R1).